The primary structure comprises 214 residues: MRVRNKPWAPKLIAAHPELITEDPTQLKGRWQSRFAKPQPLQIEVGSGKGQFIIEMAKRHPEINYVAIEIQTSVIAIILKKLVEAPLPNLQLAHADGQAVTAFFEPHEVDRLYLNFSDPWPKSRHEKRRLTYKSFLSSYREVLKPNGQIEFKTDNRGLFEFSLTSMNNFGMQFEQVWLDLHAVATPEDNVETEYEQKFSAAGPIYKIIATFPAK.

4 residues coordinate S-adenosyl-L-methionine: glutamate 44, glutamate 69, aspartate 96, and aspartate 118. Aspartate 118 is a catalytic residue. Lysine 122 is a substrate binding site. The segment at arginine 124–arginine 129 is interaction with RNA. Residues aspartate 154 and threonine 192–glutamate 195 contribute to the substrate site.

This sequence belongs to the class I-like SAM-binding methyltransferase superfamily. TrmB family.

It carries out the reaction guanosine(46) in tRNA + S-adenosyl-L-methionine = N(7)-methylguanosine(46) in tRNA + S-adenosyl-L-homocysteine. The protein operates within tRNA modification; N(7)-methylguanine-tRNA biosynthesis. Functionally, catalyzes the formation of N(7)-methylguanine at position 46 (m7G46) in tRNA. The chain is tRNA (guanine-N(7)-)-methyltransferase from Lactiplantibacillus plantarum (strain ATCC BAA-793 / NCIMB 8826 / WCFS1) (Lactobacillus plantarum).